We begin with the raw amino-acid sequence, 379 residues long: Forkhead box protein F1 (379 aa).

A disordered region spans residues 1–45; it reads MSSAPEKQQPPHGGGGGGGGGGGAAMDPASSGPSKAKKTNAGIRR. The span at 12–24 shows a compositional bias: gly residues; it reads HGGGGGGGGGGGA. Residues 47–138 constitute a DNA-binding region (fork-head); that stretch reads EKPPYSYIAL…EFMFEEGSFR (92 aa).

In terms of tissue distribution, expressed in lung and placenta.

Its subcellular location is the nucleus. Functionally, probable transcription activator for a number of lung-specific genes. This Homo sapiens (Human) protein is Forkhead box protein F1 (FOXF1).